The primary structure comprises 388 residues: Formate-dependent phosphoribosylglycinamide formyltransferase (388 aa).

Residues 11 to 12 and glutamate 71 contribute to the N(1)-(5-phospho-beta-D-ribosyl)glycinamide site; that span reads EL. Residues arginine 103, lysine 144, 149–154, 184–187, and glutamate 192 each bind ATP; these read SSGKGQ and EEFI. Residues 108-300 form the ATP-grasp domain; the sequence is DLAAKELGLK…EFELHLRAVL (193 aa). Mg(2+) is bound by residues glutamate 257 and glutamate 270. N(1)-(5-phospho-beta-D-ribosyl)glycinamide-binding positions include aspartate 277, lysine 349, and 356-357; that span reads RR.

The protein belongs to the PurK/PurT family. Homodimer.

The enzyme catalyses N(1)-(5-phospho-beta-D-ribosyl)glycinamide + formate + ATP = N(2)-formyl-N(1)-(5-phospho-beta-D-ribosyl)glycinamide + ADP + phosphate + H(+). The protein operates within purine metabolism; IMP biosynthesis via de novo pathway; N(2)-formyl-N(1)-(5-phospho-D-ribosyl)glycinamide from N(1)-(5-phospho-D-ribosyl)glycinamide (formate route): step 1/1. In terms of biological role, involved in the de novo purine biosynthesis. Catalyzes the transfer of formate to 5-phospho-ribosyl-glycinamide (GAR), producing 5-phospho-ribosyl-N-formylglycinamide (FGAR). Formate is provided by PurU via hydrolysis of 10-formyl-tetrahydrofolate. This Bacteroides fragilis (strain ATCC 25285 / DSM 2151 / CCUG 4856 / JCM 11019 / LMG 10263 / NCTC 9343 / Onslow / VPI 2553 / EN-2) protein is Formate-dependent phosphoribosylglycinamide formyltransferase.